A 224-amino-acid chain; its full sequence is Phosphoribosylformylglycinamidine synthase subunit PurQ (224 aa).

In terms of domain architecture, Glutamine amidotransferase type-1 spans 4–224 (RIGVVTFPGT…YSALDAVLTG (221 aa)). Residue Cys87 is the Nucleophile of the active site. Active-site residues include His195 and Glu197.

As to quaternary structure, part of the FGAM synthase complex composed of 1 PurL, 1 PurQ and 2 PurS subunits.

It is found in the cytoplasm. It catalyses the reaction N(2)-formyl-N(1)-(5-phospho-beta-D-ribosyl)glycinamide + L-glutamine + ATP + H2O = 2-formamido-N(1)-(5-O-phospho-beta-D-ribosyl)acetamidine + L-glutamate + ADP + phosphate + H(+). It carries out the reaction L-glutamine + H2O = L-glutamate + NH4(+). Its pathway is purine metabolism; IMP biosynthesis via de novo pathway; 5-amino-1-(5-phospho-D-ribosyl)imidazole from N(2)-formyl-N(1)-(5-phospho-D-ribosyl)glycinamide: step 1/2. In terms of biological role, part of the phosphoribosylformylglycinamidine synthase complex involved in the purines biosynthetic pathway. Catalyzes the ATP-dependent conversion of formylglycinamide ribonucleotide (FGAR) and glutamine to yield formylglycinamidine ribonucleotide (FGAM) and glutamate. The FGAM synthase complex is composed of three subunits. PurQ produces an ammonia molecule by converting glutamine to glutamate. PurL transfers the ammonia molecule to FGAR to form FGAM in an ATP-dependent manner. PurS interacts with PurQ and PurL and is thought to assist in the transfer of the ammonia molecule from PurQ to PurL. In Mycobacterium bovis (strain ATCC BAA-935 / AF2122/97), this protein is Phosphoribosylformylglycinamidine synthase subunit PurQ.